The chain runs to 421 residues: ATP-dependent RNA helicase RhlB (421 aa).

Residues 9 to 37 (QKFSDFALHPKVVEALEKKGFHNCTPIQA) carry the Q motif motif. The 180-residue stretch at 40–219 (LPLTLAGRDV…FEQMNNAEYI (180 aa)) folds into the Helicase ATP-binding domain. An ATP-binding site is contributed by 53–60 (AQTGTGKT). A DEAD box motif is present at residues 165-168 (DEAD). One can recognise a Helicase C-terminal domain in the interval 245-390 (RLLQTLIEEE…VSKYNPDALM (146 aa)). Residues 392–421 (DLPKPLRLTRPRTGNGPRRTGAPRNRRRSG) are disordered. The span at 402-414 (PRTGNGPRRTGAP) shows a compositional bias: low complexity.

This sequence belongs to the DEAD box helicase family. RhlB subfamily. Component of the RNA degradosome, which is a multiprotein complex involved in RNA processing and mRNA degradation.

The protein localises to the cytoplasm. The catalysed reaction is ATP + H2O = ADP + phosphate + H(+). Functionally, DEAD-box RNA helicase involved in RNA degradation. Has RNA-dependent ATPase activity and unwinds double-stranded RNA. In Escherichia coli O157:H7 (strain EC4115 / EHEC), this protein is ATP-dependent RNA helicase RhlB.